We begin with the raw amino-acid sequence, 414 residues long: Histidine--tRNA ligase (414 aa).

This sequence belongs to the class-II aminoacyl-tRNA synthetase family. Homodimer.

It is found in the cytoplasm. The enzyme catalyses tRNA(His) + L-histidine + ATP = L-histidyl-tRNA(His) + AMP + diphosphate + H(+). This is Histidine--tRNA ligase from Anaeromyxobacter dehalogenans (strain 2CP-1 / ATCC BAA-258).